We begin with the raw amino-acid sequence, 931 residues long: Netrin receptor UNC5C (931 aa).

A signal peptide spans 1 to 40 (MRKGLRATAARCGLGLGYLLQMLVLPALALLSASGTGSAA). At 41-380 (QDDDFFHELP…APDSDDVALY (340 aa)) the chain is on the extracellular side. Residues 62-159 (PHFLIEPEEA…AGTTKSRKAY (98 aa)) form the Ig-like domain. Disulfide bonds link Cys83/Cys144, Cys95/Cys142, Cys188/Cys239, Cys272/Cys309, Cys276/Cys313, Cys287/Cys299, Cys328/Cys362, Cys332/Cys367, and Cys340/Cys352. The Ig-like C2-type domain occupies 161–256 (RIAYLRKTFE…KRKSTTATVI (96 aa)). Asn236 carries N-linked (GlcNAc...) asparagine glycosylation. TSP type-1 domains follow at residues 260 to 314 (NGGW…TLCP) and 316 to 368 (DGRW…GLCM). A glycan (N-linked (GlcNAc...) asparagine) is linked at Asn361. Residues 381–401 (VGIVIAVTVCLAITVVVALFV) traverse the membrane as a helical segment. The Cytoplasmic segment spans residues 402–931 (YRKNHRDFES…VVSLAAEGQY (530 aa)). Residues 402–931 (YRKNHRDFES…VVSLAAEGQY (530 aa)) form a required for netrin-mediated axon repulsion of neuronal growth cones region. Ser502 carries the phosphoserine modification. The 144-residue stretch at 530–673 (CTAFGTFNSL…LSTYALVGQS (144 aa)) folds into the ZU5 domain. A Phosphotyrosine modification is found at Tyr568. An interaction with DCC region spans residues 694 to 712 (SLEYSIRVYCLDDTQDALK). Residues 850 to 929 (QKLCSSLDAP…ETVVSLAAEG (80 aa)) enclose the Death domain.

The protein belongs to the unc-5 family. Interacts with DCC (via cytoplasmic domain). Interacts (tyrosine phosphorylated form) with PTPN11. Interacts (via extracellular domain) with FLRT3 (via extracellular domain). Interacts (via Ig-like C2-type domain) with DSCAM (via extracellular domain). Interacts (via death domain) with DAPK1. Interacts (via cytoplasmic domain) with TUBB3; this interaction is decreased by NTN1/Netrin-1. Proteolytically cleaved by caspases during apoptosis. The cleavage does not take place when the receptor is associated with netrin ligand. Its cleavage by caspases is required to induce apoptosis. In terms of processing, phosphorylated on different cytoplasmic tyrosine residues. Phosphorylation of Tyr-568 leads to an interaction with PTPN11 phosphatase, suggesting that its activity is regulated by phosphorylation/dephosphorylation. Tyrosine phosphorylation is netrin-dependent. In terms of tissue distribution, detected in brain (at protein level). Mainly expressed in brain. Also expressed in kidney. Not expressed in developing or adult lung.

The protein resides in the cell membrane. Its subcellular location is the cell surface. The protein localises to the synapse. It localises to the synaptosome. It is found in the cell projection. The protein resides in the axon. Its subcellular location is the dendrite. The protein localises to the growth cone. It localises to the lamellipodium. It is found in the filopodium. In terms of biological role, receptor for netrin required for axon guidance. Mediates axon repulsion of neuronal growth cones in the developing nervous system upon ligand binding. NTN1/Netrin-1 binding might cause dissociation of UNC5C from polymerized TUBB3 in microtubules and thereby lead to increased microtubule dynamics and axon repulsion. Axon repulsion in growth cones may also be caused by its association with DCC that may trigger signaling for repulsion. Might also collaborate with DSCAM in NTN1-mediated axon repulsion independently of DCC. Also involved in corticospinal tract axon guidance independently of DCC. Involved in dorsal root ganglion axon projection towards the spinal cord. It also acts as a dependence receptor required for apoptosis induction when not associated with netrin ligand. The protein is Netrin receptor UNC5C (Unc5c) of Rattus norvegicus (Rat).